Here is a 156-residue protein sequence, read N- to C-terminus: Arginine repressor (156 aa).

The protein belongs to the ArgR family.

It is found in the cytoplasm. The protein operates within amino-acid biosynthesis; L-arginine biosynthesis [regulation]. In terms of biological role, regulates arginine biosynthesis genes. This is Arginine repressor from Sodalis glossinidius (strain morsitans).